Consider the following 128-residue polypeptide: Probable 4-amino-4-deoxy-L-arabinose-phosphoundecaprenol flippase subunit ArnF (128 aa).

Topologically, residues 1-2 (MC) are cytoplasmic. A helical transmembrane segment spans residues 3–23 (LIWGLFSVIIASVAQLSLGFA). Residues 24–35 (ASHLPPMTHLWD) are Periplasmic-facing. Residues 36 to 56 (FIAALLAFGLDARILLLGLLG) form a helical membrane-spanning segment. At 57–76 (YLLSVFCWYKTLHKLALSKA) the chain is on the cytoplasmic side. The helical transmembrane segment at 77-97 (YALLSMSYVLVWIASMVLPGW) threads the bilayer. Residues 98 to 100 (EGT) are Periplasmic-facing. A helical transmembrane segment spans residues 101–121 (FSLKALLGVACIMSGLMLIFL). The Cytoplasmic portion of the chain corresponds to 122–128 (PTTKQRY).

Belongs to the ArnF family. Heterodimer of ArnE and ArnF.

The protein localises to the cell inner membrane. Its pathway is bacterial outer membrane biogenesis; lipopolysaccharide biosynthesis. Functionally, translocates 4-amino-4-deoxy-L-arabinose-phosphoundecaprenol (alpha-L-Ara4N-phosphoundecaprenol) from the cytoplasmic to the periplasmic side of the inner membrane. The protein is Probable 4-amino-4-deoxy-L-arabinose-phosphoundecaprenol flippase subunit ArnF of Shigella flexneri.